Here is a 1023-residue protein sequence, read N- to C-terminus: MDAQIEKAIEIAWDPRSDQNLKEQAVQYLTQVRGDSSSLQACLNLFTRDPKAAEVVRLVSLDIVNNAIQTQHIDDQSLRGLKEQLHDYVRRTYASGNEVDPPALQNKLTQTLTFLFSSLYKEGWESFIRDFLSFTGHQNGTVDNLPGVVLYLRLLSSIHDEIADLMIVRAGGETKRNVELKDLVRARDVQIVAGSFQHILTYWQGNNDAIVEMTLKVIGKWVSWIDISLVVNQDILNLLFPLVGRNPNGGEDKVKDAAIDCFTEIVAKKMKPSDKIGMILFLNLGEVVSQLIASPALHDLRNTSSYDTDLAEAVAKLVNNVVSDLVKILEDTKVEPEVRAQAEQSLQTFLPLLLRFFSDEYDEICATVIPSLTELNTFLRKAQPLPPAYSAMLTPILNAIIQKMRYDDTSSYADEDELTDEAEFQELRKRLQVLQKTIAAVDEALYVDVLSNVIGNTFQRLDQQNGQIDWRDLDLALHEMYLFGELTLVNGGLYAKSQPSSIAAERLIVMMSKMVESGIASFNHPAISLQYMEICVRYCSFFENQTQYIPQVLEQFVGFVHHNHSRVRIRSWYLFHRFVKHLRGQVGNVAETIIQSISDLLPLKAEVPKESDDDMSSEDGSHDAADVAFNAQLNLYEAIGCISSTTSTPIEKQAIYARTIMNPLFSDVQRHLEQAKSGNAQAVLQIHHIIFALGSLAHGFSDWSPGEGKRAGQAPAKEITIEFSRAAEAILFALEALKSSSEIRNAARSSFSRLMGVMGVAMLPLLPRWIDGLLTQSSSKEEIGMFLRLLDQVVFGFKKDIHEVLNSLLTPLFQRVFASLSEPVTGTDDGIQLAELRREYLSFVTVILNNELGSVLVSEQNQAFFDPLVQSVTTLAKTVTNETGNLAASKIAFSVMTKMAELWGGPTIATPGQPITSSVQPQPTFPGFDTFLIERFHPVCWEVLREPHFRPMVDAQSKSVLNELAGLEHVIYMKTGNMFVEHLQGNFFPSMGVDGSGFIKSMVESPERKGLATFLQNWLKGRA.

It belongs to the exportin family.

Its subcellular location is the nucleus. The protein localises to the cytoplasm. Its function is as follows. tRNA nucleus export receptor which facilitates tRNA translocation across the nuclear pore complex. Involved in pre-tRNA splicing, probably by affecting the interaction of pre-tRNA with splicing endonuclease. This chain is Exportin-T (los1), found in Sclerotinia sclerotiorum (strain ATCC 18683 / 1980 / Ss-1) (White mold).